Reading from the N-terminus, the 342-residue chain is Ribosomal RNA small subunit methyltransferase H (342 aa).

Residues 36–38 (GGH), Asp-56, Phe-82, Asp-100, and Gln-107 each bind S-adenosyl-L-methionine. The tract at residues 309 to 342 (ENRESGMGKGHGAAASRFPTPDSRFPTSPNGDAP) is disordered. Positions 333 to 342 (FPTSPNGDAP) are enriched in polar residues.

This sequence belongs to the methyltransferase superfamily. RsmH family.

Its subcellular location is the cytoplasm. The enzyme catalyses cytidine(1402) in 16S rRNA + S-adenosyl-L-methionine = N(4)-methylcytidine(1402) in 16S rRNA + S-adenosyl-L-homocysteine + H(+). Its function is as follows. Specifically methylates the N4 position of cytidine in position 1402 (C1402) of 16S rRNA. This chain is Ribosomal RNA small subunit methyltransferase H, found in Xanthomonas campestris pv. campestris (strain 8004).